Reading from the N-terminus, the 189-residue chain is UPF0340 protein SAG0103 (189 aa).

This sequence belongs to the UPF0340 family.

This is UPF0340 protein SAG0103 from Streptococcus agalactiae serotype V (strain ATCC BAA-611 / 2603 V/R).